The primary structure comprises 860 residues: Protein argonaute-2 (860 aa).

Tyr-2 carries the post-translational modification 3'-nitrotyrosine. Positions 230–349 constitute a PAZ domain; the sequence is PVIEFVCEVL…LPLEVCNIVA (120 aa). The interval 312 to 317 is interaction with guide RNA; the sequence is YFKDRH. A Phosphoserine modification is found at Ser-388. The 302-residue stretch at 518-819 folds into the Piwi domain; that stretch reads LVVVILPGKT…VAFRARYHLV (302 aa). Residues 525 to 567 are interaction with guide RNA; sequence GKTPVYAEVKRVGDTVLGMATQCVQMKNVQRTTPQTLSNLCLK. The tract at residues 588–591 is interaction with GW182 family members; sequence FQQP. Asp-598 provides a ligand contact to a divalent metal cation. Positions 651–661 are interaction with GW182 family members; sequence LIQFYKSTRFK. Residue Asp-670 participates in a divalent metal cation binding. The residue at position 701 (Pro-701) is a 4-hydroxyproline. Interaction with guide RNA regions lie at residues 710–711, 754–762, and 791–813; these read KR, HAGIQGTSR, and YVRCTRSVSIPAPAYYAHLVAFR. His-808 serves as a coordination point for a divalent metal cation. Phosphoserine occurs at positions 825, 829, 832, and 835.

This sequence belongs to the argonaute family. Ago subfamily. As to quaternary structure, interacts with DICER1 through its Piwi domain and with TARBP2 during assembly of the RNA-induced silencing complex (RISC). Together, DICER1, AGO2 and TARBP2 constitute the trimeric RISC loading complex (RLC), or micro-RNA (miRNA) loading complex (miRLC). Within the RLC/miRLC, DICER1 and TARBP2 are required to process precursor miRNAs (pre-miRNAs) to mature miRNAs and then load them onto AGO2. AGO2 bound to the mature miRNA constitutes the minimal RISC and may subsequently dissociate from DICER1 and TARBP2. Note however that the term RISC has also been used to describe the trimeric RLC/miRLC. The formation of RISC complexes containing siRNAs rather than miRNAs appears to occur independently of DICER1. Interacts with AGO1. Also interacts with DDB1, DDX5, DDX6, DDX20, DHX30, DHX36, DDX47, DHX9, ELAVL, FXR1, GEMIN4, HNRNPF, IGF2BP1, ILF3, IMP8, MATR3, PABPC1, PRMT5, P4HA1, P4HB, RBM4, SART3, TNRC6A, TNRC6B, UPF1 and YBX1. Interacts with the P-body components DCP1A and XRN1. Associates with polysomes and messenger ribonucleoproteins (mNRPs). Interacts with RBM4; the interaction is modulated under stress-induced conditions, occurs under both cell proliferation and differentiation conditions and in an RNA- and phosphorylation-independent manner. Interacts with LIMD1, WTIP and AJUBA. Interacts with TRIM71. Interacts with APOBEC3G in an RNA-dependent manner. Interacts with APOBEC3A, APOBEC3C, APOBEC3F and APOBEC3H. Interacts with DICER1, TARBP2, EIF6, MOV10 and RPL7A (60S ribosome subunit); they form a large RNA-induced silencing complex (RISC). Interacts with FMR1. Interacts with ZFP36. Interacts with RC3H1; the interaction is RNA independent. Interacts with ARB2A. Found in a complex composed of AGO2, CHD7 and ARB2A. Interacts with SND1 and SYT11. Interacts with CLNK. Interacts with GARRE1. Interacts with GRB2; this interaction is important for the formation of a ternary complex containing GRB2, AGO2 and DICER1. Mg(2+) serves as cofactor. Mn(2+) is required as a cofactor. Hydroxylated. 4-hydroxylation appears to enhance protein stability but is not required for miRNA-binding or endonuclease activity. Post-translationally, ubiquitinated on surface-exposed lysines by a SCF-like E3 ubiquitin-protein ligase complex containing ZSWIM8 during target-directed microRNA degradation (TDMD), a process that mediates degradation of microRNAs (miRNAs). Ubiquitination by the SCF-like E3 ubiquitin-protein ligase complex containing ZSWIM8 leads to its subsequent degradation, thereby exposing miRNAs for degradation. ZSWIM8 recognizes and binds AGO2 when it is engaged with a TDMD target. In terms of processing, phosphorylation at Ser-388 by AKT3; leads to up-regulate translational repression of microRNA target and down-regulate endonucleolytic cleavage. A phosphorylation cycle of C-terminal serine cluster (Ser-825-Ser-835) regulates the release of target mRNAs. Target-binding leads to phosphorylation of these residues by CSNK1A1, which reduces the affinity of AGO2 for mRNA and enables target release. The ANKRD52-PPP6C phosphatase complex dephosphorylates the residues, which primes AGO2 for binding a new target. In terms of tissue distribution, ubiquitous expression in 9.5 day embryos with highest levels in forebrain, heart, limb buds, and branchial arches.

It localises to the cytoplasm. The protein localises to the P-body. The protein resides in the nucleus. It catalyses the reaction Endonucleolytic cleavage to 5'-phosphomonoester.. In terms of biological role, required for RNA-mediated gene silencing (RNAi) by the RNA-induced silencing complex (RISC). The 'minimal RISC' appears to include AGO2 bound to a short guide RNA such as a microRNA (miRNA) or short interfering RNA (siRNA). These guide RNAs direct RISC to complementary mRNAs that are targets for RISC-mediated gene silencing. The precise mechanism of gene silencing depends on the degree of complementarity between the miRNA or siRNA and its target. Binding of RISC to a perfectly complementary mRNA generally results in silencing due to endonucleolytic cleavage of the mRNA specifically by AGO2. Binding of RISC to a partially complementary mRNA results in silencing through inhibition of translation, and this is independent of endonuclease activity. May inhibit translation initiation by binding to the 7-methylguanosine cap, thereby preventing the recruitment of the translation initiation factor eIF4-E. May also inhibit translation initiation via interaction with EIF6, which itself binds to the 60S ribosomal subunit and prevents its association with the 40S ribosomal subunit. The inhibition of translational initiation leads to the accumulation of the affected mRNA in cytoplasmic processing bodies (P-bodies), where mRNA degradation may subsequently occur. In some cases RISC-mediated translational repression is also observed for miRNAs that perfectly match the 3' untranslated region (3'-UTR). Can also up-regulate the translation of specific mRNAs under certain growth conditions. Binds to the AU element of the 3'-UTR of the TNF (TNF-alpha) mRNA and up-regulates translation under conditions of serum starvation. Also required for transcriptional gene silencing (TGS), in which short RNAs known as antigene RNAs or agRNAs direct the transcriptional repression of complementary promoter regions. Regulates lymphoid and erythroid development and function, and this is independent of endonuclease activity. This chain is Protein argonaute-2 (Ago2), found in Mus musculus (Mouse).